Here is a 219-residue protein sequence, read N- to C-terminus: Protein YNG1 (219 aa).

The PHD-type; degenerate zinc-finger motif lies at 155–204 (EVYCFCRNVSYGPMVACDNPACPFEWFHYGCVGLKQAPKGKWYCSKDCKE). Residues C158, C160, C171, C176, H182, C185, C198, and C202 each coordinate Zn(2+).

Belongs to the ING family. Component of the NuA3 histone acetyltransferase (HAT) complex. The NuA3 HAT complex has 2 functionally distinct forms that participate in transcription. The NuA3a HAT complex is composed of at least NTO1, SAS3, TAF14, YNG1 and EAF6. The NuA3b HAT complex contains an additional subunit, PDP3. Interacts with H3K4me3 and to a lesser extent with H3K4me2.

The protein resides in the nucleus. Histone-binding component of the NuA3a histone acetyltransferase complex. Targets the NuA3a HAT complex via histone H3K4me3 to facilitate transcription initiation at promoter regions. SAS3 then acetylates H3K14, leading to transcription initiation at a subset of genes. YNG1 is required for the HAT activity of NuA3 but not for its integrity. Mediates the interaction of SAS3 with nucleosomes. The sequence is that of Protein YNG1 (YNG1) from Saccharomyces cerevisiae (strain ATCC 204508 / S288c) (Baker's yeast).